Here is a 115-residue protein sequence, read N- to C-terminus: Large ribosomal subunit protein mL60 (115 aa).

The N-terminal 23 residues, 1–23 (MLGAFNSTLARFGGLVHKVPWRL), are a transit peptide targeting the mitochondrion. The disordered stretch occupies residues 88–115 (AGLQGFRKGVHKSPKWTRSTNRVNPTGF). A compositionally biased stretch (polar residues) spans 103-115 (WTRSTNRVNPTGF).

The protein belongs to the mitochondrion-specific ribosomal protein mL60 family. Component of the mitochondrial large ribosomal subunit (mt-LSU). Mature yeast 74S mitochondrial ribosomes consist of a small (37S) and a large (54S) subunit. The 37S small subunit contains a 15S ribosomal RNA (15S mt-rRNA) and at least 32 different proteins. The 54S large subunit contains a 21S rRNA (21S mt-rRNA) and at least 45 different proteins.

The protein localises to the mitochondrion. Its function is as follows. Component of the mitochondrial ribosome (mitoribosome), a dedicated translation machinery responsible for the synthesis of mitochondrial genome-encoded proteins, including at least some of the essential transmembrane subunits of the mitochondrial respiratory chain. The mitoribosomes are attached to the mitochondrial inner membrane and translation products are cotranslationally integrated into the membrane. The protein is Large ribosomal subunit protein mL60 (mrpl31) of Schizosaccharomyces pombe (strain 972 / ATCC 24843) (Fission yeast).